The following is a 35-amino-acid chain: Photosystem II reaction center protein T (35 aa).

A helical membrane pass occupies residues 3 to 23 (ALVYTFLLVSTLGIIFFAIFF).

The protein belongs to the PsbT family. PSII is composed of 1 copy each of membrane proteins PsbA, PsbB, PsbC, PsbD, PsbE, PsbF, PsbH, PsbI, PsbJ, PsbK, PsbL, PsbM, PsbT, PsbY, PsbZ, Psb30/Ycf12, at least 3 peripheral proteins of the oxygen-evolving complex and a large number of cofactors. It forms dimeric complexes.

It is found in the plastid. It localises to the chloroplast thylakoid membrane. In terms of biological role, found at the monomer-monomer interface of the photosystem II (PS II) dimer, plays a role in assembly and dimerization of PSII. PSII is a light-driven water plastoquinone oxidoreductase, using light energy to abstract electrons from H(2)O, generating a proton gradient subsequently used for ATP formation. The polypeptide is Photosystem II reaction center protein T (Suaeda aralocaspica (Seablite)).